The following is a 916-amino-acid chain: Extracellular signal-regulated kinase 7 (916 aa).

Positions 25–319 (FDVRKRMGKG…AKEAIRHPYV (295 aa)) constitute a Protein kinase domain. ATP-binding positions include 31-39 (MGKGAYGIV) and Lys-54. Asp-149 (proton acceptor) is an active-site residue. 2 stretches are compositionally biased toward polar residues: residues 364–376 (CSNR…TPSS) and 390–403 (QART…TTSP). Disordered regions lie at residues 364–419 (CSNR…TQSR), 452–477 (PPAA…KSVP), 588–608 (PSET…QMKR), 711–742 (KKLQ…SQNY), 792–813 (ELNP…PGRD), and 883–916 (CRHR…PESN). Basic and acidic residues-rich tracts occupy residues 590–608 (ETEH…QMKR), 715–730 (RSKE…RRAL), and 800–811 (GGRDSGSEHSPG). Positions 883–892 (CRHRHHKPNH) are enriched in basic residues. Positions 894–903 (APYDHMRPTE) are enriched in basic and acidic residues.

Belongs to the protein kinase superfamily. Ser/Thr protein kinase family.

The catalysed reaction is L-seryl-[protein] + ATP = O-phospho-L-seryl-[protein] + ADP + H(+). It carries out the reaction L-threonyl-[protein] + ATP = O-phospho-L-threonyl-[protein] + ADP + H(+). In terms of biological role, atypical MAPK protein that regulates protein secretion in a kinase activity-dependent manner. In response to starvation regulates protein secretion by mediating transitional endoplasmic reticulum site disassembly. Mediates inhibition of insulin-like peptide secretion upon disturbed ribosome biogenesis and acts as a downstream effector of TP53. The polypeptide is Extracellular signal-regulated kinase 7 (Drosophila melanogaster (Fruit fly)).